An 86-amino-acid polypeptide reads, in one-letter code: Small ribosomal subunit protein bS20 (86 aa).

Positions 1–11 (MANIKSQKKRV) are enriched in basic residues. Positions 1–20 (MANIKSQKKRVRTNEKAHQR) are disordered.

The protein belongs to the bacterial ribosomal protein bS20 family.

Its function is as follows. Binds directly to 16S ribosomal RNA. The sequence is that of Small ribosomal subunit protein bS20 from Bifidobacterium animalis subsp. lactis (strain AD011).